Reading from the N-terminus, the 282-residue chain is 3-methyl-2-oxobutanoate hydroxymethyltransferase (282 aa).

Residues Asp-44 and Asp-83 each contribute to the Mg(2+) site. Residues 44-45 (DS), Asp-83, and Lys-112 each bind 3-methyl-2-oxobutanoate. Mg(2+) is bound at residue Glu-114. Residue Glu-181 is the Proton acceptor of the active site.

This sequence belongs to the PanB family. As to quaternary structure, homodecamer; pentamer of dimers. It depends on Mg(2+) as a cofactor.

The protein localises to the cytoplasm. The catalysed reaction is 3-methyl-2-oxobutanoate + (6R)-5,10-methylene-5,6,7,8-tetrahydrofolate + H2O = 2-dehydropantoate + (6S)-5,6,7,8-tetrahydrofolate. It participates in cofactor biosynthesis; coenzyme A biosynthesis. In terms of biological role, catalyzes the reversible reaction in which hydroxymethyl group from 5,10-methylenetetrahydrofolate is transferred onto alpha-ketoisovalerate to form ketopantoate. This is 3-methyl-2-oxobutanoate hydroxymethyltransferase from Pyrococcus abyssi (strain GE5 / Orsay).